The primary structure comprises 174 residues: Stigma-specific STIG1-like protein 4 (174 aa).

The signal sequence occupies residues 1 to 25; sequence MMSIKLTLCALIFFLLNSLLHHVLG. Positions 140–174 are disordered; it reads PSSQPGKRHRRHKFHRPRPPPSPDSKLNYDDHDDE. The segment covering 145-157 has biased composition (basic residues); it reads GKRHRRHKFHRPR.

This sequence belongs to the STIG1 family.

It localises to the secreted. Its function is as follows. Endosperm-specific cysteine-rich protein that acts downstream of BHLH95/ZOU to modify the interface between embryo and endosperm and mediate the separation of these two tissues during seed development. Necessary for the biogenesis of the embryo sheath, an extracuticular endosperm-derived structure at the surface of the embryo. Required for the separation of embryo and endosperm, and for normal progression of the embryo through the endosperm tissue. Required for the formation of a normal embryonic cuticle. The sequence is that of Stigma-specific STIG1-like protein 4 from Arabidopsis thaliana (Mouse-ear cress).